The sequence spans 619 residues: Dynein axonemal intermediate chain 2 (619 aa).

WD repeat units follow at residues 214–254 (KPSS…LVAE), 261–302 (SHRD…EPTE), 362–401 (GHHGPIYALQRNPFYPKNFLTVGDWAARIWSEESRESSIM), 405–445 (YHMA…CDPA), and 450–489 (VCDDPLFCLRVQDTGCLIACGSELGTTTLLEVSSSLSTLQ). The segment at 566-619 (EALKKKPKPKKASIEVEGEDELEDIAGEEEESGIIMGEDTGEDDMDEKNEGGAP) is disordered. The segment covering 581–597 (VEGEDELEDIAGEEEES) has biased composition (acidic residues).

Belongs to the dynein intermediate chain family. Consists of at least two heavy chains and a number of intermediate and light chains. Interacts with DNAAF2. Interacts with DNAAF6/PIH1D3. Interacts with HEATR2; probably involved in outer arm dynein assembly. Interacts with CFAP53.

It is found in the cytoplasm. Its subcellular location is the cytoskeleton. The protein resides in the cilium axoneme. The protein localises to the dynein axonemal particle. Functionally, part of the dynein complex of respiratory cilia. The protein is Dynein axonemal intermediate chain 2 (Dnai2) of Rattus norvegicus (Rat).